The primary structure comprises 93 residues: Mitochondrial import inner membrane translocase subunit TIM10 (93 aa).

The segment at 1–31 is interaction with transmembrane regions of transmembrane proteins in transit; it reads MSFLGFGGGQPQLSSQQKIQAAEAELDLVTD. Residues 40-65 carry the Twin CX3C motif motif; the sequence is CYKKCINTSYSEGELNKNESSCLDRC. 2 disulfide bridges follow: C40–C65 and C44–C61. The tract at residues 73-93 is required for heterohexamerization; sequence NVQVGENMQKMGQSFNAAGKF.

It belongs to the small Tim family. In terms of assembly, heterohexamer; composed of 3 copies of TIM9 and 3 copies of TIM10, named soluble 70 kDa complex. Associates directly with the TIM12 component of the TIM22 complex, whose core is composed of TIM18, TIM22 and TIM54. Interacts with the transmembrane regions of multi-pass transmembrane proteins in transit.

Its subcellular location is the mitochondrion inner membrane. The protein resides in the mitochondrion intermembrane space. Mitochondrial intermembrane chaperone that participates in the import and insertion of multi-pass transmembrane proteins into the mitochondrial inner membrane. Also required for the transfer of beta-barrel precursors from the TOM complex to the sorting and assembly machinery (SAM complex) of the outer membrane. Acts as a chaperone-like protein that protects the hydrophobic precursors from aggregation and guide them through the mitochondrial intermembrane space. Compared to TIM9, it may function as a substrate sensor. The polypeptide is Mitochondrial import inner membrane translocase subunit TIM10 (TIM10) (Saccharomyces cerevisiae (strain ATCC 204508 / S288c) (Baker's yeast)).